The following is a 526-amino-acid chain: CTP synthase (526 aa).

The tract at residues 1-264 is amidoligase domain; that stretch reads MPQRFIVVTG…HKLIAKELDI (264 aa). Ser14 contacts CTP. Ser14 provides a ligand contact to UTP. Residues 15–20 and Asp72 each bind ATP; that span reads GIGKGI. Residues Asp72 and Glu138 each coordinate Mg(2+). CTP is bound by residues 145–147, 185–190, and Lys221; these read DIE and KTKPTQ. UTP is bound by residues 185-190 and Lys221; that span reads KTKPTQ. Positions 282 to 526 constitute a Glutamine amidotransferase type-1 domain; it reads KIGIVGKYLG…VKAAGGKIND (245 aa). An L-glutamine-binding site is contributed by Gly342. The active-site Nucleophile; for glutamine hydrolysis is Cys369. L-glutamine-binding positions include 370–373, Glu393, and Arg451; that span reads LGMQ. Active-site residues include His499 and Glu501.

Belongs to the CTP synthase family. In terms of assembly, homotetramer.

It carries out the reaction UTP + L-glutamine + ATP + H2O = CTP + L-glutamate + ADP + phosphate + 2 H(+). It catalyses the reaction L-glutamine + H2O = L-glutamate + NH4(+). The catalysed reaction is UTP + NH4(+) + ATP = CTP + ADP + phosphate + 2 H(+). It participates in pyrimidine metabolism; CTP biosynthesis via de novo pathway; CTP from UDP: step 2/2. Its activity is regulated as follows. Allosterically activated by GTP, when glutamine is the substrate; GTP has no effect on the reaction when ammonia is the substrate. The allosteric effector GTP functions by stabilizing the protein conformation that binds the tetrahedral intermediate(s) formed during glutamine hydrolysis. Inhibited by the product CTP, via allosteric rather than competitive inhibition. In terms of biological role, catalyzes the ATP-dependent amination of UTP to CTP with either L-glutamine or ammonia as the source of nitrogen. Regulates intracellular CTP levels through interactions with the four ribonucleotide triphosphates. The sequence is that of CTP synthase from Thermosipho africanus (strain TCF52B).